The primary structure comprises 270 residues: Ribosomal RNA-processing protein 7 homolog (270 aa).

A coiled-coil region spans residues 233-268 (TFQIKKNRQEKAQELLKKFEEDRKRITQLKQARNFK).

This sequence belongs to the RRP7 family.

The sequence is that of Ribosomal RNA-processing protein 7 homolog from Caenorhabditis elegans.